A 99-amino-acid polypeptide reads, in one-letter code: Protein RnfH (99 aa).

It belongs to the UPF0125 (RnfH) family.

This is Protein RnfH from Buchnera aphidicola subsp. Acyrthosiphon pisum (strain 5A).